A 61-amino-acid polypeptide reads, in one-letter code: MARKCEICGKGPQFGNRVSHSNRKTRHKFNPNIQSVRIEINGVSRKVKICTSCLRSLKKSV.

This sequence belongs to the bacterial ribosomal protein bL28 family.

This is Large ribosomal subunit protein bL28 from Nautilia profundicola (strain ATCC BAA-1463 / DSM 18972 / AmH).